A 237-amino-acid chain; its full sequence is Ribosomal RNA small subunit methyltransferase G (237 aa).

S-adenosyl-L-methionine is bound by residues glycine 78, phenylalanine 83, 129–130 (AE), and arginine 148. The tract at residues 218 to 237 (KKETPNKFPRKAGMPNKRPL) is disordered.

The protein belongs to the methyltransferase superfamily. RNA methyltransferase RsmG family.

It is found in the cytoplasm. Its function is as follows. Specifically methylates the N7 position of a guanine in 16S rRNA. The sequence is that of Ribosomal RNA small subunit methyltransferase G from Streptococcus suis (strain 98HAH33).